Consider the following 422-residue polypeptide: L-2-hydroxyglutarate dehydrogenase (422 aa).

Belongs to the L2HGDH family. FAD serves as cofactor.

Its subcellular location is the cell inner membrane. The catalysed reaction is (S)-2-hydroxyglutarate + a quinone = a quinol + 2-oxoglutarate. The protein operates within amino-acid degradation. Functionally, catalyzes the dehydrogenation of L-2-hydroxyglutarate (L2HG) to alpha-ketoglutarate and couples to the respiratory chain by feeding electrons from the reaction into the membrane quinone pool. Functions in a L-lysine degradation pathway that proceeds via cadaverine, glutarate and L-2-hydroxyglutarate. Also displays some oxidase activity in vitro on L-2-hydroxyglutarate with O2 as the electron acceptor, but this activity is most likely not physiological. The sequence is that of L-2-hydroxyglutarate dehydrogenase from Salmonella houtenae.